The sequence spans 432 residues: Adenylosuccinate synthetase 2 (432 aa).

GTP contacts are provided by residues 13 to 19 and 41 to 43; these read GDEGKGK and GHT. Catalysis depends on aspartate 14, which acts as the Proton acceptor. 2 residues coordinate Mg(2+): aspartate 14 and glycine 41. Residues 14-17, 39-42, threonine 130, arginine 144, glutamine 225, threonine 240, and arginine 304 each bind IMP; these read DEGK and NAGH. The Proton donor role is filled by histidine 42. Residue 300 to 306 coordinates substrate; sequence ATTGRSR. Residues arginine 306, 332-334, and 415-417 contribute to the GTP site; these read KLD and STG.

Belongs to the adenylosuccinate synthetase family. Homodimer. The cofactor is Mg(2+).

It localises to the cytoplasm. The enzyme catalyses IMP + L-aspartate + GTP = N(6)-(1,2-dicarboxyethyl)-AMP + GDP + phosphate + 2 H(+). It participates in purine metabolism; AMP biosynthesis via de novo pathway; AMP from IMP: step 1/2. Plays an important role in the de novo pathway of purine nucleotide biosynthesis. Catalyzes the first committed step in the biosynthesis of AMP from IMP. This Photorhabdus laumondii subsp. laumondii (strain DSM 15139 / CIP 105565 / TT01) (Photorhabdus luminescens subsp. laumondii) protein is Adenylosuccinate synthetase 2.